The primary structure comprises 252 residues: Phosphoglycolate phosphatase (252 aa).

Asp-13 acts as the Nucleophile in catalysis. Mg(2+)-binding residues include Asp-13, Asp-15, and Asp-192.

Belongs to the HAD-like hydrolase superfamily. CbbY/CbbZ/Gph/YieH family. As to quaternary structure, monomer. Mg(2+) serves as cofactor. The cofactor is chloride.

It carries out the reaction 2-phosphoglycolate + H2O = glycolate + phosphate. It participates in organic acid metabolism; glycolate biosynthesis; glycolate from 2-phosphoglycolate: step 1/1. Functionally, specifically catalyzes the dephosphorylation of 2-phosphoglycolate. Is involved in the dissimilation of the intracellular 2-phosphoglycolate formed during the DNA repair of 3'-phosphoglycolate ends, a major class of DNA lesions induced by oxidative stress. The sequence is that of Phosphoglycolate phosphatase from Shigella dysenteriae serotype 1 (strain Sd197).